We begin with the raw amino-acid sequence, 65 residues long: Translational regulator CsrA (65 aa).

The protein belongs to the CsrA/RsmA family. In terms of assembly, homodimer; the beta-strands of each monomer intercalate to form a hydrophobic core, while the alpha-helices form wings that extend away from the core.

The protein localises to the cytoplasm. Its function is as follows. A key translational regulator that binds mRNA to regulate translation initiation and/or mRNA stability. Mediates global changes in gene expression, shifting from rapid growth to stress survival by linking envelope stress, the stringent response and the catabolite repression systems. Usually binds in the 5'-UTR; binding at or near the Shine-Dalgarno sequence prevents ribosome-binding, repressing translation, binding elsewhere in the 5'-UTR can activate translation and/or stabilize the mRNA. Its function is antagonized by small RNA(s). The sequence is that of Translational regulator CsrA from Pseudomonas putida (strain ATCC 47054 / DSM 6125 / CFBP 8728 / NCIMB 11950 / KT2440).